The sequence spans 312 residues: Methionyl-tRNA formyltransferase (312 aa).

A (6S)-5,6,7,8-tetrahydrofolate-binding site is contributed by 107–110; it reads SLLP.

Belongs to the Fmt family.

It carries out the reaction L-methionyl-tRNA(fMet) + (6R)-10-formyltetrahydrofolate = N-formyl-L-methionyl-tRNA(fMet) + (6S)-5,6,7,8-tetrahydrofolate + H(+). Attaches a formyl group to the free amino group of methionyl-tRNA(fMet). The formyl group appears to play a dual role in the initiator identity of N-formylmethionyl-tRNA by promoting its recognition by IF2 and preventing the misappropriation of this tRNA by the elongation apparatus. The chain is Methionyl-tRNA formyltransferase from Borreliella burgdorferi (strain ZS7) (Borrelia burgdorferi).